Reading from the N-terminus, the 160-residue chain is Nucleotide-binding protein CPS_1098 (160 aa).

The protein belongs to the YajQ family.

Its function is as follows. Nucleotide-binding protein. The polypeptide is Nucleotide-binding protein CPS_1098 (Colwellia psychrerythraea (strain 34H / ATCC BAA-681) (Vibrio psychroerythus)).